Consider the following 395-residue polypeptide: Acetate kinase (395 aa).

Residue Asn-7 participates in Mg(2+) binding. Lys-14 provides a ligand contact to ATP. Residue Arg-88 coordinates substrate. The Proton donor/acceptor role is filled by Asp-145. Residues 205–209 (HLGNG), 279–281 (DFR), and 327–331 (GIGEN) contribute to the ATP site. Glu-381 contacts Mg(2+).

Belongs to the acetokinase family. Homodimer. It depends on Mg(2+) as a cofactor. Mn(2+) is required as a cofactor.

The protein resides in the cytoplasm. It carries out the reaction acetate + ATP = acetyl phosphate + ADP. It functions in the pathway metabolic intermediate biosynthesis; acetyl-CoA biosynthesis; acetyl-CoA from acetate: step 1/2. Functionally, catalyzes the formation of acetyl phosphate from acetate and ATP. Can also catalyze the reverse reaction. The polypeptide is Acetate kinase (Campylobacter jejuni subsp. jejuni serotype O:6 (strain 81116 / NCTC 11828)).